Consider the following 101-residue polypeptide: Large ribosomal subunit protein bL9m (101 aa).

The N-terminal 32 residues, 1 to 32 (MSIMKPTTRFFRFNSLELAVSPFQRIYGQLRF), are a transit peptide targeting the mitochondrion.

It belongs to the bacterial ribosomal protein bL9 family. Component of the mitochondrial large ribosomal subunit (mt-LSU). Mature yeast 74S mitochondrial ribosomes consist of a small (37S) and a large (54S) subunit. The 37S small subunit contains a 15S ribosomal RNA (15S mt-rRNA) and at least 32 different proteins. The 54S large subunit contains a 21S rRNA (21S mt-rRNA) and at least 45 different proteins.

Its subcellular location is the mitochondrion. Functionally, component of the mitochondrial ribosome (mitoribosome), a dedicated translation machinery responsible for the synthesis of mitochondrial genome-encoded proteins, including at least some of the essential transmembrane subunits of the mitochondrial respiratory chain. The mitoribosomes are attached to the mitochondrial inner membrane and translation products are cotranslationally integrated into the membrane. The chain is Large ribosomal subunit protein bL9m from Schizosaccharomyces pombe (strain 972 / ATCC 24843) (Fission yeast).